The primary structure comprises 507 residues: Glycosyltransferase family 92 protein C33H5.2 (507 aa).

A helical membrane pass occupies residues 6–26; sequence VILVFCASFALFFTFIIFGRY. In terms of domain architecture, GT92 spans 155–444; sequence RDVVMCIAPL…LKCYNEKFYD (290 aa).

The protein belongs to the glycosyltransferase 92 family.

The protein resides in the membrane. This is Glycosyltransferase family 92 protein C33H5.2 from Caenorhabditis elegans.